A 291-amino-acid polypeptide reads, in one-letter code: RPE-retinal G protein-coupled receptor (291 aa).

At 1–15 the chain is on the extracellular side; that stretch reads MAATRALPAGLGELE. A helical transmembrane segment spans residues 16 to 36; the sequence is VLAVGTVLLMEALSGISLNGL. At 37 to 52 the chain is on the cytoplasmic side; that stretch reads TIFSFCKTPDLRTPSN. Residues 53 to 73 traverse the membrane as a helical segment; it reads LLVLSLALADTGISLNALVAA. Topologically, residues 74-91 are extracellular; the sequence is VSSLLRRWPHGSEGCQVH. Cysteines 88 and 162 form a disulfide. The chain crosses the membrane as a helical span at residues 92-112; sequence GFQGFATALASICGSAAVAWG. Over 113–130 the chain is Cytoplasmic; sequence RYHHYCTRRQLAWDTAIP. Residues 131–151 traverse the membrane as a helical segment; it reads LVLFVWMSSAFWASLPLMGWG. The Extracellular portion of the chain corresponds to 152–175; that stretch reads HYDYEPVGTCCTLDYSRGDRNFIS. Residues 176–196 form a helical membrane-spanning segment; it reads FLFTMAFFNFLVPLFITHTSY. Topologically, residues 197 to 219 are cytoplasmic; the sequence is RFMEQKFSRSGHLPVNTTLPGRM. The chain crosses the membrane as a helical span at residues 220 to 240; sequence LLLGWGPYALLYLYAAIADVS. Topologically, residues 241-247 are extracellular; that stretch reads FISPKLQ. A helical transmembrane segment spans residues 248–268; sequence MVPALIAKTMPTINAINYALH. Position 255 is an N6-(retinylidene)lysine (K255). Residues 269 to 291 lie on the Cytoplasmic side of the membrane; the sequence is REMVCRGTWQCLSPQKSKKDRTQ.

Belongs to the G-protein coupled receptor 1 family. Opsin subfamily. Covalently binds all-trans- and 11-cis-retinal.

It is found in the membrane. Receptor for all-trans- and 11-cis-retinal. Binds preferentially to the former and may catalyze the isomerization of the chromophore by a retinochrome-like mechanism. This chain is RPE-retinal G protein-coupled receptor (Rgr), found in Mus musculus (Mouse).